The chain runs to 388 residues: Succinate--CoA ligase [ADP-forming] subunit beta (388 aa).

The ATP-grasp domain maps to 9 to 244 (KQLFARYGLP…QSQEDPREAQ (236 aa)). ATP-binding positions include Lys46, 53-55 (GRG), Glu99, Thr102, and Glu107. Mg(2+)-binding residues include Asn199 and Asp213. Residues Asn264 and 321–323 (GIV) contribute to the substrate site.

This sequence belongs to the succinate/malate CoA ligase beta subunit family. Heterotetramer of two alpha and two beta subunits. Mg(2+) serves as cofactor.

It carries out the reaction succinate + ATP + CoA = succinyl-CoA + ADP + phosphate. The catalysed reaction is GTP + succinate + CoA = succinyl-CoA + GDP + phosphate. The protein operates within carbohydrate metabolism; tricarboxylic acid cycle; succinate from succinyl-CoA (ligase route): step 1/1. Its function is as follows. Succinyl-CoA synthetase functions in the citric acid cycle (TCA), coupling the hydrolysis of succinyl-CoA to the synthesis of either ATP or GTP and thus represents the only step of substrate-level phosphorylation in the TCA. The beta subunit provides nucleotide specificity of the enzyme and binds the substrate succinate, while the binding sites for coenzyme A and phosphate are found in the alpha subunit. The sequence is that of Succinate--CoA ligase [ADP-forming] subunit beta from Enterobacter sp. (strain 638).